The chain runs to 255 residues: 5-oxoprolinase subunit A (255 aa).

It belongs to the LamB/PxpA family. Forms a complex composed of PxpA, PxpB and PxpC.

It catalyses the reaction 5-oxo-L-proline + ATP + 2 H2O = L-glutamate + ADP + phosphate + H(+). Functionally, catalyzes the cleavage of 5-oxoproline to form L-glutamate coupled to the hydrolysis of ATP to ADP and inorganic phosphate. The polypeptide is 5-oxoprolinase subunit A (Nitrobacter hamburgensis (strain DSM 10229 / NCIMB 13809 / X14)).